The following is a 216-amino-acid chain: Glutathione S-transferase 1, isoform B (216 aa).

In terms of domain architecture, GST N-terminal spans 1–80; that stretch reads MDFYYLPGSA…YLVEKYGKPC (80 aa). Glutathione is bound by residues Ser-9, 50–52, and 64–66; these read HCV and ESR. In terms of domain architecture, GST C-terminal spans 89 to 210; the sequence is DPQKRAIVNQ…RSWAEAARPF (122 aa).

Belongs to the GST superfamily. Theta family. As to quaternary structure, homodimer.

It catalyses the reaction RX + glutathione = an S-substituted glutathione + a halide anion + H(+). Its function is as follows. Conjugation of reduced glutathione to a wide number of exogenous and endogenous hydrophobic electrophiles. This is Glutathione S-transferase 1, isoform B from Anopheles gambiae (African malaria mosquito).